We begin with the raw amino-acid sequence, 358 residues long: Protein-glutamate methylesterase/protein-glutamine glutaminase 3 (358 aa).

The Response regulatory domain occupies 2–118; that stretch reads KILVVDDSAL…CGRLQEVAPL (117 aa). Asp-52 is subject to 4-aspartylphosphate. In terms of domain architecture, CheB-type methylesterase spans 155–325; it reads NNEDHQLAIM…VPSMPEALLK (171 aa). Residues Ser-167, His-194, and Asp-291 contribute to the active site.

Belongs to the CheB family. In terms of processing, phosphorylated by CheA. Phosphorylation of the N-terminal regulatory domain activates the methylesterase activity.

The protein resides in the cytoplasm. It catalyses the reaction [protein]-L-glutamate 5-O-methyl ester + H2O = L-glutamyl-[protein] + methanol + H(+). It carries out the reaction L-glutaminyl-[protein] + H2O = L-glutamyl-[protein] + NH4(+). Functionally, involved in chemotaxis. Part of a chemotaxis signal transduction system that modulates chemotaxis in response to various stimuli. Catalyzes the demethylation of specific methylglutamate residues introduced into the chemoreceptors (methyl-accepting chemotaxis proteins or MCP) by CheR. Also mediates the irreversible deamidation of specific glutamine residues to glutamic acid. The protein is Protein-glutamate methylesterase/protein-glutamine glutaminase 3 of Vibrio cholerae serotype O1 (strain ATCC 39315 / El Tor Inaba N16961).